An 88-amino-acid chain; its full sequence is Kunitz-type U15-theraphotoxin-Hhn1e (88 aa).

The N-terminal stretch at 1–27 is a signal peptide; the sequence is MGTARFLRAVLLLSVLLMVTFPALLSA. The propeptide occupies 28–33; sequence EHHDGR. A BPTI/Kunitz inhibitor domain is found at 37 to 85; sequence CRLPSDSGDCLRFFEMWYFDGTTCTKFVYGGYGGNDNRFPTKKACMKRC. 2 disulfides stabilise this stretch: Cys37–Cys85 and Cys60–Cys81.

Belongs to the venom Kunitz-type family. 03 (sub-Kunitz) subfamily. Expressed by the venom gland.

It is found in the secreted. In terms of biological role, serine protease inhibitor that inhibits trypsin at a molar ratio of 1:1. The polypeptide is Kunitz-type U15-theraphotoxin-Hhn1e (Cyriopagopus hainanus (Chinese bird spider)).